Here is a 214-residue protein sequence, read N- to C-terminus: Charged multivesicular body protein 2b (214 aa).

The stretch at 16–55 (EQNKELRGTQRAITRDRAALEKQEKQLEMEIKKMAKAGNK) forms a coiled coil. Residues 178–203 (MAKAPSAAKGLPSTSASKSSGISDEE) form a disordered region. Polar residues predominate over residues 189–199 (PSTSASKSSGI). Residues 202–212 (EEIERQLKALG) carry the MIT-interacting motif motif.

This sequence belongs to the SNF7 family. In terms of assembly, probable core component of the endosomal sorting required for transport complex III (ESCRT-III). ESCRT-III components are thought to multimerize to form a flat lattice on the perimeter membrane of the endosome.

The protein resides in the cytoplasm. It localises to the cytosol. Its subcellular location is the late endosome membrane. Probable core component of the endosomal sorting required for transport complex III (ESCRT-III) which is involved in multivesicular bodies (MVBs) formation and sorting of endosomal cargo proteins into MVBs. MVBs contain intraluminal vesicles (ILVs) that are generated by invagination and scission from the limiting membrane of the endosome and mostly are delivered to lysosomes enabling degradation of membrane proteins, such as stimulated growth factor receptors, lysosomal enzymes and lipids. This chain is Charged multivesicular body protein 2b (chmp2b), found in Xenopus tropicalis (Western clawed frog).